The chain runs to 780 residues: Dynamin-related protein 3B (780 aa).

Ser2 carries the N-acetylserine modification. Residues 40–315 form the Dynamin-type G domain; that stretch reads TIALPQVAVV…LVQHIKALLP (276 aa). The tract at residues 50 to 57 is G1 motif; the sequence is GSQSSGKS. 50–57 provides a ligand contact to GTP; the sequence is GSQSSGKS. The G2 motif stretch occupies residues 76-78; it reads CTR. The segment at 157–160 is G3 motif; sequence DLPG. GTP is bound by residues 157–161 and 226–229; these read DLPGI and TKLD. The G4 motif stretch occupies residues 226-229; it reads TKLD. Residues 256 to 259 are G5 motif; that stretch reads VNRS. Disordered stretches follow at residues 536–558 and 573–592; these read PVARPRDTVEPERTASSGSQIKT and QAVPTAADAERPAPAGSTSW. A compositionally biased stretch (basic and acidic residues) spans 539–548; the sequence is RPRDTVEPER. Residues 549 to 558 are compositionally biased toward polar residues; the sequence is TASSGSQIKT. Positions 654-745 constitute a GED domain; it reads IEITKLLLKS…TLDELPLEAE (92 aa). Residues 753–770 are compositionally biased toward basic and acidic residues; sequence IGSEAKHEELPGTRRSRT. The segment at 753–780 is disordered; sequence IGSEAKHEELPGTRRSRTETNGNGRLHM. Residues 771–780 are compositionally biased toward polar residues; it reads ETNGNGRLHM.

Belongs to the TRAFAC class dynamin-like GTPase superfamily. Dynamin/Fzo/YdjA family. As to quaternary structure, interacts with ARC5 on peroxisomes and ELM1 on mitochondria.

It is found in the mitochondrion. The protein resides in the peroxisome. In terms of biological role, involved in the control of mitochondrial and peroxisomal division and morphology. This chain is Dynamin-related protein 3B (DRP3B), found in Arabidopsis thaliana (Mouse-ear cress).